Reading from the N-terminus, the 558-residue chain is Potassium-transporting ATPase potassium-binding subunit 1 (558 aa).

12 helical membrane passes run 1–21, 66–86, 127–147, 166–186, 245–265, 281–301, 327–347, 354–374, 377–397, 416–436, 482–502, and 531–551; these read MEII…SGYL, FNGF…WLFL, MIVM…VCIA, IVRF…ILLM, IWSN…MLFL, ALIL…LTMW, FGAG…TGSV, LTPL…VFGG, VGLM…SLMV, IVLV…LAFM, ISTG…QLMI, and IVFI…LGPI.

Belongs to the KdpA family. As to quaternary structure, the system is composed of three essential subunits: KdpA, KdpB and KdpC.

The protein localises to the cell membrane. In terms of biological role, part of the high-affinity ATP-driven potassium transport (or Kdp) system, which catalyzes the hydrolysis of ATP coupled with the electrogenic transport of potassium into the cytoplasm. This subunit binds the extracellular potassium ions and delivers the ions to the membrane domain of KdpB through an intramembrane tunnel. The protein is Potassium-transporting ATPase potassium-binding subunit 1 of Staphylococcus aureus (strain MRSA252).